A 343-amino-acid polypeptide reads, in one-letter code: Anthranilate phosphoribosyltransferase (343 aa).

Residues Gly-84, 87–88 (GD), Thr-92, 94–97 (NIST), 112–120 (KHGNRSASS), and Ser-124 each bind 5-phospho-alpha-D-ribose 1-diphosphate. Anthranilate is bound at residue Gly-84. Residue Ser-96 coordinates Mg(2+). Anthranilate is bound at residue Asn-115. Anthranilate is bound at residue Arg-170. Mg(2+)-binding residues include Asp-229 and Glu-230.

Belongs to the anthranilate phosphoribosyltransferase family. As to quaternary structure, homodimer. The cofactor is Mg(2+).

It catalyses the reaction N-(5-phospho-beta-D-ribosyl)anthranilate + diphosphate = 5-phospho-alpha-D-ribose 1-diphosphate + anthranilate. The protein operates within amino-acid biosynthesis; L-tryptophan biosynthesis; L-tryptophan from chorismate: step 2/5. Catalyzes the transfer of the phosphoribosyl group of 5-phosphorylribose-1-pyrophosphate (PRPP) to anthranilate to yield N-(5'-phosphoribosyl)-anthranilate (PRA). In Bordetella pertussis (strain Tohama I / ATCC BAA-589 / NCTC 13251), this protein is Anthranilate phosphoribosyltransferase.